A 177-amino-acid chain; its full sequence is Large ribosomal subunit protein uL6 (177 aa).

This sequence belongs to the universal ribosomal protein uL6 family. As to quaternary structure, part of the 50S ribosomal subunit.

This protein binds to the 23S rRNA, and is important in its secondary structure. It is located near the subunit interface in the base of the L7/L12 stalk, and near the tRNA binding site of the peptidyltransferase center. The protein is Large ribosomal subunit protein uL6 of Shewanella frigidimarina (strain NCIMB 400).